A 34-amino-acid polypeptide reads, in one-letter code: Photosystem II reaction center protein T (34 aa).

A helical membrane pass occupies residues 3–23 (ALVYTFLLVSTLGIIFFAIFF).

It belongs to the PsbT family. In terms of assembly, PSII is composed of 1 copy each of membrane proteins PsbA, PsbB, PsbC, PsbD, PsbE, PsbF, PsbH, PsbI, PsbJ, PsbK, PsbL, PsbM, PsbT, PsbY, PsbZ, Psb30/Ycf12, at least 3 peripheral proteins of the oxygen-evolving complex and a large number of cofactors. It forms dimeric complexes.

Its subcellular location is the plastid. It is found in the chloroplast thylakoid membrane. In terms of biological role, found at the monomer-monomer interface of the photosystem II (PS II) dimer, plays a role in assembly and dimerization of PSII. PSII is a light-driven water plastoquinone oxidoreductase, using light energy to abstract electrons from H(2)O, generating a proton gradient subsequently used for ATP formation. This chain is Photosystem II reaction center protein T, found in Atropa belladonna (Belladonna).